The sequence spans 438 residues: MTTSPGVPEPSAQLLRLAAEVRQAAMALGQSDDNQRRKALIAMANALLSSSEQIVRANRLDLEKARTEGLAAALMARLKLDESKLNSAIEGLRQLAQLSDPLGLRQLHRELDQDLVLERITVPLGVLGVIFEARPDAVIQIASLAIRSGNGALLKGGSEASHTNQAIIEALKNGLAETEIDPEAIALLTTRQESLALLRLDGLVDLIIPRGSNELVRFIQDNTRIPVLGHADGICHLYLDAAADLKQALQIAIDSKTQYPAACNAIETLLIHQSIAPSFLELAIPAFRQARVRLLGDSASRALGVEESASEEDWATEYLDLILSVKVVPDLEGALDHIRRYSSRHTEAIVSNDQETAERFLQVVDSAGVFHNCSTRFADGFRYGFGAEVGISTQTLPPRGPVGLEGLVTYRYRLRGQGQIVADYANGECMFTHRDLPL.

Belongs to the gamma-glutamyl phosphate reductase family.

The protein localises to the cytoplasm. The catalysed reaction is L-glutamate 5-semialdehyde + phosphate + NADP(+) = L-glutamyl 5-phosphate + NADPH + H(+). The protein operates within amino-acid biosynthesis; L-proline biosynthesis; L-glutamate 5-semialdehyde from L-glutamate: step 2/2. Functionally, catalyzes the NADPH-dependent reduction of L-glutamate 5-phosphate into L-glutamate 5-semialdehyde and phosphate. The product spontaneously undergoes cyclization to form 1-pyrroline-5-carboxylate. The sequence is that of Gamma-glutamyl phosphate reductase from Prochlorococcus marinus (strain MIT 9303).